We begin with the raw amino-acid sequence, 623 residues long: Myosin light chain kinase 2, skeletal/cardiac muscle (623 aa).

2 disordered regions span residues 1 to 179 (MATE…PSCP) and 204 to 251 (GVPV…QGDT). Ala-2 is modified (N-acetylalanine). Residues 20–31 (APKAAAGEGPPA) are compositionally biased toward low complexity. 2 stretches are compositionally biased toward basic and acidic residues: residues 32-43 (AEKDPGPPDPQK) and 49-89 (DPEK…EKGD). A compositionally biased stretch (low complexity) spans 90-102 (GASAQPSASSQGP). The span at 150-159 (GEAKEQKKVA) shows a compositional bias: basic and acidic residues. Phosphoserine is present on residues Ser-169, Ser-175, and Ser-177. Low complexity predominate over residues 204 to 214 (GVPVTPGPTET). A compositionally biased stretch (basic and acidic residues) spans 215-224 (EPAKVAEGEK). A Protein kinase domain is found at 312 to 567 (LNSKEALGGG…AAQCLAHPWL (256 aa)). ATP-binding positions include 318–326 (LGGGKFGAV) and Lys-341. Asp-433 acts as the Proton acceptor in catalysis. At Thr-472 the chain carries Phosphothreonine. A calmodulin-binding region spans residues 601–613 (IAVSAANRFKKIS).

The protein belongs to the protein kinase superfamily. CAMK Ser/Thr protein kinase family. May interact with centrin.

Its subcellular location is the cytoplasm. It catalyses the reaction L-seryl-[myosin light chain] + ATP = O-phospho-L-seryl-[myosin light chain] + ADP + H(+). The catalysed reaction is L-threonyl-[myosin light chain] + ATP = O-phospho-L-threonyl-[myosin light chain] + ADP + H(+). Implicated in the level of global muscle contraction and cardiac function. Phosphorylates a specific serine in the N-terminus of a myosin light chain. The protein is Myosin light chain kinase 2, skeletal/cardiac muscle (MYLK2) of Bos taurus (Bovine).